The sequence spans 251 residues: Esterase mlcF (251 aa).

Active-site charge relay system residues include Ser126, Asp193, and His221.

Belongs to the LovG family.

The catalysed reaction is dihydro-ML-236C-[compactin nonaketide synthase] + H2O = holo-[compactin nonaketide synthase] + dihydro-ML-236C carboxylate + H(+). Its pathway is polyketide biosynthesis. Esterase; part of the gene cluster that mediates the biosynthesis of compactin, also known as mevastatin or ML-236B, and which acts as a potent competitive inhibitor of HMG-CoA reductase. Compactin biosynthesis is performed in two stages. The first stage is catalyzed by the nonaketide synthase mlcA, which belongs to type I polyketide synthases and catalyzes the iterative nine-step formation of the polyketide. This PKS stage is completed by the action of dehydrogenase mlcG, which catalyzes the NADPH-dependent reduction of the unsaturated tetra-, penta- and heptaketide intermediates that arise during the mlcA-mediated biosynthesis of the nonaketide chain and leads to dihydro-ML-236C carboxylate. Covalently bound dihydro-ML-236C carboxylate is released from mlcA by the mlcF esterase. Conversion of dihydro-ML-236C carboxylate into ML-236A carboxylate is subsequently performed with the participation of molecular oxygen and P450 monoogygenase mlcC. Finally, mlcH performs the conversion of ML-236A carboxylate to ML-236B/compactin carboxylate through the addition of the side-chain diketide moiety produced by the diketide synthase mlcB. This is Esterase mlcF from Penicillium citrinum.